We begin with the raw amino-acid sequence, 382 residues long: Mannan endo-1,4-beta-mannosidase (382 aa).

A signal peptide spans 1–19; it reads MVKLFSFLLLVWVASPAFS. Residues Trp83, Asn144, 147 to 151, and Asn180 contribute to the substrate site; that span reads WDESK. Residue Glu181 is the Proton donor/acceptor of the active site. Residues Gln187, Gln204, Trp208, Trp243, Tyr282, and His284 each coordinate substrate. Cys195 and Cys262 are joined by a disulfide. Residue Glu312 is the Nucleophile of the active site. An intrachain disulfide couples Cys317 to Cys349. Substrate is bound by residues Trp341 and Asp348. Residues 346-350 form an involved in stabilization of the transition state region; the sequence is GGDCS.

It belongs to the glycosyl hydrolase 5 (cellulase A) family. In terms of assembly, monomer.

The protein resides in the secreted. It catalyses the reaction Random hydrolysis of (1-&gt;4)-beta-D-mannosidic linkages in mannans, galactomannans and glucomannans.. Activated particularly by Ca(2+) and Zn(2+), and to a lesser extent by Na(+), K(+), Mg(2+) and Cu(2+). Activation effect of the divalent metal ions Ca(2+), Zn(2+), Mg(2+) and Cu(2+) is reduced significantly by the addition of EDTA. Strongly inhibited by Mn(2+), Hg(2+) and Ag(+). Its function is as follows. Hydrolyzes 1,4-beta linked polysaccharide backbones of mannans. Has high activity toward locust bean gum. Also active toward konjac and beta-1,4-mannan. Hydrolyzes mannotetraose (M4) and mannopentaose (M5) to mannobiose (M2) and mannotriose (M3) with a little production of mannose (M1). Hydrolyzes beta-1,4-mannan to M2, M3 and M4. Hardly hydrolyzes M2 and M3. Does not hydrolyze p-nitrophenyl-beta-D-mannopyranoside, gua-gum, carboxymethyl cellulose, soluble starch or laminarin. In Cryptopygus antarcticus (Antarctic springtail), this protein is Mannan endo-1,4-beta-mannosidase.